Consider the following 431-residue polypeptide: 3-phosphoshikimate 1-carboxyvinyltransferase (431 aa).

Residues lysine 21, serine 22, and arginine 26 each contribute to the 3-phosphoshikimate site. Lysine 21 contributes to the phosphoenolpyruvate binding site. Phosphoenolpyruvate-binding residues include glycine 93 and arginine 121. Serine 166, glutamine 168, serine 192, aspartate 317, and lysine 344 together coordinate 3-phosphoshikimate. A phosphoenolpyruvate-binding site is contributed by glutamine 168. Residue aspartate 317 is the Proton acceptor of the active site. Residues arginine 348 and arginine 390 each coordinate phosphoenolpyruvate.

This sequence belongs to the EPSP synthase family. In terms of assembly, monomer.

Its subcellular location is the cytoplasm. It carries out the reaction 3-phosphoshikimate + phosphoenolpyruvate = 5-O-(1-carboxyvinyl)-3-phosphoshikimate + phosphate. The protein operates within metabolic intermediate biosynthesis; chorismate biosynthesis; chorismate from D-erythrose 4-phosphate and phosphoenolpyruvate: step 6/7. In terms of biological role, catalyzes the transfer of the enolpyruvyl moiety of phosphoenolpyruvate (PEP) to the 5-hydroxyl of shikimate-3-phosphate (S3P) to produce enolpyruvyl shikimate-3-phosphate and inorganic phosphate. The chain is 3-phosphoshikimate 1-carboxyvinyltransferase from Herpetosiphon aurantiacus (strain ATCC 23779 / DSM 785 / 114-95).